The following is a 148-amino-acid chain: Receptor activity-modifying protein 3 (148 aa).

The N-terminal stretch at 1–23 is a signal peptide; it reads METGALRRPQLLPLLLLLCGGCP. Residues 24–113 lie on the Extracellular side of the membrane; sequence RAGGCNETGM…CTVDRVHLED (90 aa). N-linked (GlcNAc...) asparagine glycans are attached at residues asparagine 29, asparagine 58, asparagine 71, and asparagine 103. Cystine bridges form between cysteine 40–cysteine 72 and cysteine 57–cysteine 104. Residues 114–138 form a helical membrane-spanning segment; that stretch reads PPDEVLIPLIVIPVVLTVAMAGLVV. Residues 139–148 are Cytoplasmic-facing; it reads WRSKRTDTLL.

The protein belongs to the RAMP family. As to quaternary structure, heterodimer of CALCRL and RAMP3; interaction induces allosteric modulation of CALCRL function and ligand specificity for adrenomedullin/ADM and intermedin/ADM2. Heterodimer of CALCR and RAMP3; interaction form the receptor complex AMYR3 for amylin/IAPP. Interacts with GPER1. In terms of tissue distribution, strongly expressed in lung, breast, immune system and fetal tissues.

The protein localises to the cell membrane. Its subcellular location is the membrane. Functionally, accessory protein that interacts with and modulates the function of G-protein coupled receptors including calcitonin gene-related peptide type 1 receptor (CALCRL), calcitonin receptor (CALCR) and G-protein coupled estrogen receptor 1 (GPER1). Required for the transport of CALCRL and GPER1 receptors to the plasma membrane. Plays a role in cardioprotection by reducing cardiac hypertrophy and perivascular fibrosis in a GPER1-dependent manner. Together with CALCRL, form a receptor complex for adrenomedullin/ADM and intermedin/ADM2. Together with CALCR, act as a receptor complex for amylin/IAPP. This Homo sapiens (Human) protein is Receptor activity-modifying protein 3.